The following is a 409-amino-acid chain: MSVITTPIETLHLKSTLRLLPRAVYRSQRIQVFPPNIFSNTSLSSPLRIDPISQVGGSRNLWRRYASDNFSEMGLDPGADPFKVIEKPSIVDRMKKANSILPHVVLASTILALIYPPSFTWFTSRYFVPALGFLMFAVGINSNEKDFLEAFKRPKAILLGYVGQYLVKPVLGFIFGLAAVSLFQLPTPIGAGIMLVSCVSGAQLSNYATFLTDPALAPLSIVMTSLSTATAVLVTPMLSLLLIGKKLPVDVKGMISSILQVVIAPIAAGLLLNKLFPKVSNAIRPFLPILSVLDTACCVGAPLALNINSVMSPFGATILLLVTMFHLSAFLAGYFLTGSVFRNAPDAKAMQRTLSYETGMQSSLLALALATKFFQDPLVGIPPAISTVVMSLMGFTLVLIWSKEKSNTF.

A chloroplast-targeting transit peptide spans M1–I49. Helical transmembrane passes span I100–T120, W121–N141, V170–G190, A191–L211, I221–L241, G253–N273, P285–L305, A316–L336, and I381–W401.

This sequence belongs to the bile acid:sodium symporter (BASS) (TC 2.A.28) family.

It localises to the membrane. Its subcellular location is the plastid. The protein localises to the chloroplast envelope. May function as sodium-coupled metabolite transporter across the chloroplast envelope. The protein is Probable sodium/metabolite cotransporter BASS6, chloroplastic (BASS6) of Arabidopsis thaliana (Mouse-ear cress).